A 266-amino-acid polypeptide reads, in one-letter code: Putative expansin-A30 (266 aa).

A signal peptide spans 1–24 (MAAASSTTATTAILAAVIISLAGA). The Expansin-like EG45 domain occupies 55 to 170 (GGACGYGNLY…RRVPCARAGG (116 aa)). The Expansin-like CBD domain maps to 180–261 (YWLLAYVMNV…SWCFGLTYQA (82 aa)).

This sequence belongs to the expansin family. Expansin A subfamily.

It is found in the secreted. The protein localises to the cell wall. Its subcellular location is the membrane. Functionally, may cause loosening and extension of plant cell walls by disrupting non-covalent bonding between cellulose microfibrils and matrix glucans. No enzymatic activity has been found. May be required for rapid internodal elongation in deepwater rice during submergence. The sequence is that of Putative expansin-A30 (EXPA30) from Oryza sativa subsp. japonica (Rice).